A 561-amino-acid chain; its full sequence is Oxygen-dependent choline dehydrogenase (561 aa).

Residue 6-35 (DYIIIGAGSAGNVLATRLTEDADVSVLLLE) participates in FAD binding. H475 functions as the Proton acceptor in the catalytic mechanism.

The protein belongs to the GMC oxidoreductase family. Requires FAD as cofactor.

It catalyses the reaction choline + A = betaine aldehyde + AH2. The catalysed reaction is betaine aldehyde + NAD(+) + H2O = glycine betaine + NADH + 2 H(+). The protein operates within amine and polyamine biosynthesis; betaine biosynthesis via choline pathway; betaine aldehyde from choline (cytochrome c reductase route): step 1/1. Involved in the biosynthesis of the osmoprotectant glycine betaine. Catalyzes the oxidation of choline to betaine aldehyde and betaine aldehyde to glycine betaine at the same rate. The polypeptide is Oxygen-dependent choline dehydrogenase (Pseudomonas aeruginosa (strain UCBPP-PA14)).